The primary structure comprises 181 residues: TATA-box-binding protein C (181 aa).

2 repeat units span residues 5–83 (IANI…LGML) and 99–177 (VENV…QSKV).

Belongs to the TBP family.

Its function is as follows. General factor that plays a role in the activation of archaeal genes transcribed by RNA polymerase. Binds specifically to the TATA box promoter element which lies close to the position of transcription initiation. The sequence is that of TATA-box-binding protein C (tbpC1) from Halobacterium salinarum (strain ATCC 700922 / JCM 11081 / NRC-1) (Halobacterium halobium).